A 305-amino-acid chain; its full sequence is Glycine--tRNA ligase alpha subunit (305 aa).

The protein belongs to the class-II aminoacyl-tRNA synthetase family. In terms of assembly, tetramer of two alpha and two beta subunits.

It localises to the cytoplasm. The catalysed reaction is tRNA(Gly) + glycine + ATP = glycyl-tRNA(Gly) + AMP + diphosphate. This is Glycine--tRNA ligase alpha subunit from Streptococcus sanguinis (strain SK36).